The sequence spans 270 residues: Shikimate dehydrogenase (NADP(+)) (270 aa).

Residues 14 to 16 (SKS) and T61 contribute to the shikimate site. K65 (proton acceptor) is an active-site residue. Residues N86 and D101 each contribute to the shikimate site. NADP(+) contacts are provided by residues 126–130 (GAGGA), 150–155 (NRTVSK), and M213. Y215 is a binding site for shikimate. Position 237 (G237) interacts with NADP(+).

This sequence belongs to the shikimate dehydrogenase family. Homodimer.

The enzyme catalyses shikimate + NADP(+) = 3-dehydroshikimate + NADPH + H(+). The protein operates within metabolic intermediate biosynthesis; chorismate biosynthesis; chorismate from D-erythrose 4-phosphate and phosphoenolpyruvate: step 4/7. In terms of biological role, involved in the biosynthesis of the chorismate, which leads to the biosynthesis of aromatic amino acids. Catalyzes the reversible NADPH linked reduction of 3-dehydroshikimate (DHSA) to yield shikimate (SA). This is Shikimate dehydrogenase (NADP(+)) from Hahella chejuensis (strain KCTC 2396).